The following is a 265-amino-acid chain: Cytochrome b-c1 complex subunit Rieske, mitochondrial (265 aa).

The N-terminal 53 residues, 1-53 (MLRVAGRRLSSSAARSSSTFFTRSSFTVTDDSSPARSPSPSLTSSFLDQIRGF), are a transit peptide targeting the mitochondrion. Over 54–102 (SSNSVSPAHQLGLVSDLPATVAAIKNPSSKIVYDDSNHERYPPGDPSKR) the chain is Mitochondrial matrix. The helical transmembrane segment at 103-125 (AFAYFVLTGGRFVYASSVRLLIL) threads the bilayer. The Mitochondrial intermembrane portion of the chain corresponds to 126–265 (KFVLSMSASK…FLEENKLLIG (140 aa)). Residues 175–263 (IKLANSVDLG…YSFLEENKLL (89 aa)) enclose the Rieske domain. Residues Cys208, His210, Cys227, and His230 each contribute to the [2Fe-2S] cluster site. An intrachain disulfide couples Cys213 to Cys229.

It belongs to the Rieske iron-sulfur protein family. Component of the ubiquinol-cytochrome c oxidoreductase (cytochrome b-c1 complex, complex III, CIII), a multisubunit enzyme composed of 3 respiratory subunits cytochrome b, cytochrome c1 and Rieske protein, 2 core protein subunits, and several low-molecular weight protein subunits. The complex exists as an obligatory dimer and forms supercomplexes (SCs) in the inner mitochondrial membrane with cytochrome c oxidase (complex IV, CIV). [2Fe-2S] cluster is required as a cofactor.

The protein localises to the mitochondrion inner membrane. The catalysed reaction is a quinol + 2 Fe(III)-[cytochrome c](out) = a quinone + 2 Fe(II)-[cytochrome c](out) + 2 H(+)(out). Its function is as follows. Component of the ubiquinol-cytochrome c oxidoreductase, a multisubunit transmembrane complex that is part of the mitochondrial electron transport chain which drives oxidative phosphorylation. The respiratory chain contains 3 multisubunit complexes succinate dehydrogenase (complex II, CII), ubiquinol-cytochrome c oxidoreductase (cytochrome b-c1 complex, complex III, CIII) and cytochrome c oxidase (complex IV, CIV), that cooperate to transfer electrons derived from NADH and succinate to molecular oxygen, creating an electrochemical gradient over the inner membrane that drives transmembrane transport and the ATP synthase. The cytochrome b-c1 complex catalyzes electron transfer from ubiquinol to cytochrome c, linking this redox reaction to translocation of protons across the mitochondrial inner membrane, with protons being carried across the membrane as hydrogens on the quinol. In the process called Q cycle, 2 protons are consumed from the matrix, 4 protons are released into the intermembrane space and 2 electrons are passed to cytochrome c. The Rieske protein is a catalytic core subunit containing a [2Fe-2S] iron-sulfur cluster. It cycles between 2 conformational states during catalysis to transfer electrons from the quinol bound in the Q(0) site in cytochrome b to cytochrome c1. The protein is Cytochrome b-c1 complex subunit Rieske, mitochondrial (FES1) of Solanum tuberosum (Potato).